The chain runs to 288 residues: MITQQIPHATTISALRTRVRSWREDRLSVGFVPTMGALHDGHVSLVRLAKAQCDRVVASVFVNPKQFAPGEDLDAYPRTLIDDAEKLTDAKCDLIYLPTPEAMYPDGYSAGVTLKGPALGLESAIRPHFFDGVATVVTKLFNQVRPDMAFFGEKDYQQLLVIRQLVKDLDFPINVLAGETGRDRDGLALSSRNAYLDSDQRTRAGQLNLILKAFAAALSGGASTSDATATALAAASDAFDAVDYVEARCAATLAELGDGPIDRPVRVLAAVRLGSTRLIDNMAANPPA.

35–42 (MGALHDGH) is an ATP binding site. Catalysis depends on histidine 42, which acts as the Proton donor. A (R)-pantoate-binding site is contributed by glutamine 66. Beta-alanine is bound at residue glutamine 66. 152–155 (GEKD) provides a ligand contact to ATP. Glutamine 158 lines the (R)-pantoate pocket. Residues glycine 181 and 189–192 (LSSR) contribute to the ATP site.

The protein belongs to the pantothenate synthetase family. In terms of assembly, homodimer.

It localises to the cytoplasm. The enzyme catalyses (R)-pantoate + beta-alanine + ATP = (R)-pantothenate + AMP + diphosphate + H(+). Its pathway is cofactor biosynthesis; (R)-pantothenate biosynthesis; (R)-pantothenate from (R)-pantoate and beta-alanine: step 1/1. In terms of biological role, catalyzes the condensation of pantoate with beta-alanine in an ATP-dependent reaction via a pantoyl-adenylate intermediate. This chain is Pantothenate synthetase, found in Maricaulis maris (strain MCS10) (Caulobacter maris).